A 238-amino-acid polypeptide reads, in one-letter code: Ribonuclease PH (238 aa).

Phosphate is bound by residues Arg86 and 124-126 (GTR).

It belongs to the RNase PH family. As to quaternary structure, homohexameric ring arranged as a trimer of dimers.

The enzyme catalyses tRNA(n+1) + phosphate = tRNA(n) + a ribonucleoside 5'-diphosphate. Its function is as follows. Phosphorolytic 3'-5' exoribonuclease that plays an important role in tRNA 3'-end maturation. Removes nucleotide residues following the 3'-CCA terminus of tRNAs; can also add nucleotides to the ends of RNA molecules by using nucleoside diphosphates as substrates, but this may not be physiologically important. Probably plays a role in initiation of 16S rRNA degradation (leading to ribosome degradation) during starvation. In Geobacter sulfurreducens (strain ATCC 51573 / DSM 12127 / PCA), this protein is Ribonuclease PH.